Consider the following 697-residue polypeptide: MAR-binding filament-like protein 1 (697 aa).

The transit peptide at 1-41 directs the protein to the chloroplast; that stretch reads MATSCFPPFSASSSSLCSSQFTPLLSCPRNTQICRKKRPVM. Residues 42-79 constitute a thylakoid transit peptide; sequence ASMHSENQKESNVCNRRSILFVGFSVLPLLNLRARALE. The Lumenal, thylakoid segment spans residues 80–106; the sequence is GLSTDSQAQPQKEETEQTIQGSAGNPF. Residues 81 to 100 are disordered; it reads LSTDSQAQPQKEETEQTIQG. A helical transmembrane segment spans residues 107 to 127; that stretch reads VSLLNGLGVVGSGVLGSLYAL. Topologically, residues 128–697 are stromal; it reads ARNEKAVSDA…GEKEKVNVQQ (570 aa). The stretch at 203–671 forms a coiled coil; it reads LQNEKKLAED…KGEILRLRSQ (469 aa). The interval 599–629 is disordered; that stretch reads TSRNSSLEDEREVHRQSVSEQKQISQEAQEN. Residues 604–615 show a composition bias toward basic and acidic residues; sequence SLEDEREVHRQS. The segment covering 616–627 has biased composition (polar residues); sequence VSEQKQISQEAQ.

In terms of assembly, interacts with MAF1. Interacts with PTST2; the interaction is essential for the initiation of starch granules biosynthesis in leaf chloroplasts, for the correct location of the process in the stromal spaces between the thylakoid membranes, and for the association of PTST2 with the thylakoid membranes. In terms of processing, phosphorylated in vitro by human casein kinase II. Predicted to be translocated into the thylakoid by the Tat system.

The protein localises to the plastid. Its subcellular location is the chloroplast. It localises to the chloroplast thylakoid membrane. The protein resides in the chloroplast stroma. It is found in the chloroplast nucleoid. The protein localises to the nucleus. Its subcellular location is the nucleus matrix. Required for the initiation of starch granules biosynthesis in leaf chloroplasts. Anchored to the thylakoid membranes with its C-terminus facing into the stroma where it is essential for localizing PTST2 and SS4 to the stromal spaces between the thylakoid membranes in order to begin starch granule formation. Associated with leaf chloroplastic nucleoids in vivo. Binds to various chloroplastic double-stranded DNA fragments without particular sequence specificity in vitro. May function at the interface between nucleoids and thylakoids possibly by anchoring nucleoids to the thylakoid membrane system in mature chloroplasts. Binds nuclear DNA. Interacts with chromatin via matrix attachment regions (MARs). Likely to participate in nuclear architecture by connecting chromatin with the nuclear matrix and potentially with the nuclear envelope. This is MAR-binding filament-like protein 1 from Solanum lycopersicum (Tomato).